The sequence spans 37 residues: Large ribosomal subunit protein bL36c (37 aa).

This sequence belongs to the bacterial ribosomal protein bL36 family.

The protein localises to the plastid. It is found in the chloroplast. This chain is Large ribosomal subunit protein bL36c, found in Cycas taitungensis (Prince sago).